Consider the following 78-residue polypeptide: Protein FAM240B (78 aa).

It belongs to the FAM240 family.

This is Protein FAM240B from Homo sapiens (Human).